We begin with the raw amino-acid sequence, 264 residues long: MVQQGFSIDLILARSKEEATDGKDSMSSRPHIPCAPQPLPPTKYAKEMPRKKDGQDVQEHTTSFQCSLGEQVINRPSANPSLAAMHRSSGSSDEFSPPGSEDDSTESSGRSSQENDTEQREKSPKSDLQRRLRTAFTPQQISKLEQAFNKQRYLGAPERKKLATSLQLSEIQVKTWFQNRRMKLKRQIQDKQHSLVPPPVCYPQTFPYYPGGFPVPLNSGSFYQPRALPFQAPQHSYIPQPLHHHVRMSSHQEQYPPLFGAQYM.

2 stretches are compositionally biased toward basic and acidic residues: residues 16 to 26 (KEEATDGKDSM) and 44 to 59 (YAKEMPRKKDGQDVQE). Positions 16–140 (KEEATDGKDS…RLRTAFTPQQ (125 aa)) are disordered. Residues 60-80 (HTTSFQCSLGEQVINRPSANP) are compositionally biased toward polar residues. Residues 117-130 (TEQREKSPKSDLQR) show a composition bias toward basic and acidic residues. Positions 129–188 (QRRLRTAFTPQQISKLEQAFNKQRYLGAPERKKLATSLQLSEIQVKTWFQNRRMKLKRQI) form a DNA-binding region, homeobox.

As to expression, expressed in the ventral marginal zone of gastrulae. At stage 11.5, also expressed in the ventral region of the animal cap (ectoderm). At the end of gastrulation, predominantly localized to the ventral and lateral regions of the closing slit blastopore. At early tail bud stage, expression is maintained only in the forming proctodeum.

Its subcellular location is the nucleus. In terms of biological role, transcriptional repressor. Cooperates with vent2 in a ventral signaling pathway downstream of bmp4, which antagonizes the Spemann organizer and dorsal mesoderm formation, and leads to ventral mesoderm formation. Acts downstream of bmp4 to repress transcription of foxa4-B/XFD-1'. Binds to DNA with preference for the target sequence 5'-CTATT[T/C]G-3'. Also binds 5'-TGCATTTTG-3' at a lower frequency, and occasionally 5'-TTGATC-3'. Binds to the homeobox 2 (HBX2) repressor element in the promoter of the myf5 gene and represses myf5 transcription in the ventral domain. The chain is Homeobox protein vent1 (vent1) from Xenopus laevis (African clawed frog).